Consider the following 889-residue polypeptide: Protein translocase subunit SecA (889 aa).

ATP contacts are provided by residues Gln-87, 105 to 109 (GEGKT), and Asp-494. Residues 823–889 (ESLRPEEADL…RMDKDTKGKR (67 aa)) form a disordered region. Basic and acidic residues predominate over residues 867–889 (PRDDRPMNREERRRMDKDTKGKR).

It belongs to the SecA family. Monomer and homodimer. Part of the essential Sec protein translocation apparatus which comprises SecA, SecYEG and auxiliary proteins SecDF-YajC and YidC.

It is found in the cell inner membrane. Its subcellular location is the cytoplasm. It catalyses the reaction ATP + H2O + cellular proteinSide 1 = ADP + phosphate + cellular proteinSide 2.. Part of the Sec protein translocase complex. Interacts with the SecYEG preprotein conducting channel. Has a central role in coupling the hydrolysis of ATP to the transfer of proteins into and across the cell membrane, serving as an ATP-driven molecular motor driving the stepwise translocation of polypeptide chains across the membrane. The sequence is that of Protein translocase subunit SecA from Bdellovibrio bacteriovorus (strain ATCC 15356 / DSM 50701 / NCIMB 9529 / HD100).